A 201-amino-acid polypeptide reads, in one-letter code: Probable GTP-binding protein EngB (201 aa).

One can recognise an EngB-type G domain in the interval threonine 22–glutamate 197. GTP contacts are provided by residues glycine 30–serine 37, glycine 57–leucine 61, aspartate 75–glycine 78, threonine 142–aspartate 145, and isoleucine 175–serine 178. Positions 37 and 59 each coordinate Mg(2+).

Belongs to the TRAFAC class TrmE-Era-EngA-EngB-Septin-like GTPase superfamily. EngB GTPase family. Requires Mg(2+) as cofactor.

Functionally, necessary for normal cell division and for the maintenance of normal septation. The chain is Probable GTP-binding protein EngB from Bacteroides fragilis (strain ATCC 25285 / DSM 2151 / CCUG 4856 / JCM 11019 / LMG 10263 / NCTC 9343 / Onslow / VPI 2553 / EN-2).